We begin with the raw amino-acid sequence, 436 residues long: Putative F-box/FBD/LRR-repeat protein At5g44960 (436 aa).

The region spanning Cys-4–Phe-50 is the F-box domain. LRR repeat units lie at residues Ile-287 to Gly-310 and Ser-397 to Lys-420. The FBD domain occupies Glu-355 to Phe-407.

The chain is Putative F-box/FBD/LRR-repeat protein At5g44960 from Arabidopsis thaliana (Mouse-ear cress).